The sequence spans 281 residues: Ribosomal RNA small subunit methyltransferase J (281 aa).

Residues 129–130 (RD), 145–146 (ER), and Asp-199 each bind S-adenosyl-L-methionine.

The protein belongs to the methyltransferase superfamily. RsmJ family.

It is found in the cytoplasm. The catalysed reaction is guanosine(1516) in 16S rRNA + S-adenosyl-L-methionine = N(2)-methylguanosine(1516) in 16S rRNA + S-adenosyl-L-homocysteine + H(+). Its function is as follows. Specifically methylates the guanosine in position 1516 of 16S rRNA. The chain is Ribosomal RNA small subunit methyltransferase J from Laribacter hongkongensis (strain HLHK9).